The primary structure comprises 331 residues: Probable allantoicase (331 aa).

Belongs to the allantoicase family.

The catalysed reaction is allantoate + H2O = (S)-ureidoglycolate + urea. Its pathway is nitrogen metabolism; (S)-allantoin degradation; (S)-ureidoglycolate from allantoate (aminidohydrolase route): step 1/1. This chain is Probable allantoicase, found in Pseudomonas fluorescens (strain ATCC BAA-477 / NRRL B-23932 / Pf-5).